The chain runs to 692 residues: Protein arginine N-methyltransferase 7 (692 aa).

2 SAM-dependent MTase PRMT-type domains span residues 14 to 345 (SLEW…YCVW) and 358 to 684 (SAYQ…ITME). Arg-32 bears the Omega-N-methylarginine mark. Active-site residues include Glu-144 and Glu-153.

It belongs to the class I-like SAM-binding methyltransferase superfamily. Protein arginine N-methyltransferase family. PRMT7 subfamily. Homodimer and heterodimer. Interacts with PRMT5 and SNRPD3. Interacts with CTCFL.

It is found in the cytoplasm. The protein resides in the cytosol. It localises to the nucleus. It carries out the reaction L-arginyl-[protein] + S-adenosyl-L-methionine = N(omega)-methyl-L-arginyl-[protein] + S-adenosyl-L-homocysteine + H(+). Its function is as follows. Arginine methyltransferase that can both catalyze the formation of omega-N monomethylarginine (MMA) and symmetrical dimethylarginine (sDMA), with a preference for the formation of MMA. Specifically mediates the symmetrical dimethylation of arginine residues in the small nuclear ribonucleoproteins Sm D1 (SNRPD1) and Sm D3 (SNRPD3); such methylation being required for the assembly and biogenesis of snRNP core particles. Specifically mediates the symmetric dimethylation of histone H4 'Arg-3' to form H4R3me2s. Plays a role in gene imprinting by being recruited by CTCFL at the H19 imprinted control region (ICR) and methylating histone H4 to form H4R3me2s, possibly leading to recruit DNA methyltransferases at these sites. May also play a role in embryonic stem cell (ESC) pluripotency. Also able to mediate the arginine methylation of histone H2A and myelin basic protein (MBP) in vitro; the relevance of such results is however unclear in vivo. The protein is Protein arginine N-methyltransferase 7 (Prmt7) of Mus musculus (Mouse).